Reading from the N-terminus, the 84-residue chain is Esculentin-1Vb (84 aa).

The N-terminal stretch at 1–22 (MFTLKKPLLLIVLLGIISLSLC) is a signal peptide. The propeptide occupies 23 to 36 (EQERNADEDEESET). Cys-78 and Cys-84 form a disulfide bridge.

In terms of tissue distribution, expressed by the skin glands.

It localises to the secreted. In terms of biological role, antimicrobial peptide. The polypeptide is Esculentin-1Vb (Odorrana versabilis (Chinese bamboo leaf odorous frog)).